Consider the following 275-residue polypeptide: Shikimate dehydrogenase (NADP(+)) (275 aa).

Shikimate-binding positions include 19–21 (SIS) and Thr66. The Proton acceptor role is filled by Lys70. Positions 91 and 106 each coordinate shikimate. NADP(+) contacts are provided by residues 129 to 133 (GAGGA), 153 to 158 (NRTYGR), and Ile219. Tyr221 contacts shikimate. Gly242 contacts NADP(+).

It belongs to the shikimate dehydrogenase family. Homodimer.

The catalysed reaction is shikimate + NADP(+) = 3-dehydroshikimate + NADPH + H(+). It participates in metabolic intermediate biosynthesis; chorismate biosynthesis; chorismate from D-erythrose 4-phosphate and phosphoenolpyruvate: step 4/7. In terms of biological role, involved in the biosynthesis of the chorismate, which leads to the biosynthesis of aromatic amino acids. Catalyzes the reversible NADPH linked reduction of 3-dehydroshikimate (DHSA) to yield shikimate (SA). The sequence is that of Shikimate dehydrogenase (NADP(+)) from Dictyoglomus thermophilum (strain ATCC 35947 / DSM 3960 / H-6-12).